Consider the following 279-residue polypeptide: Ribosomal RNA small subunit methyltransferase A (279 aa).

Positions 42, 67, 88, 113, and 129 each coordinate S-adenosyl-L-methionine.

Belongs to the class I-like SAM-binding methyltransferase superfamily. rRNA adenine N(6)-methyltransferase family. RsmA subfamily.

It localises to the cytoplasm. It catalyses the reaction adenosine(1518)/adenosine(1519) in 16S rRNA + 4 S-adenosyl-L-methionine = N(6)-dimethyladenosine(1518)/N(6)-dimethyladenosine(1519) in 16S rRNA + 4 S-adenosyl-L-homocysteine + 4 H(+). Its function is as follows. Specifically dimethylates two adjacent adenosines (A1518 and A1519) in the loop of a conserved hairpin near the 3'-end of 16S rRNA in the 30S particle. May play a critical role in biogenesis of 30S subunits. This is Ribosomal RNA small subunit methyltransferase A from Thermotoga maritima (strain ATCC 43589 / DSM 3109 / JCM 10099 / NBRC 100826 / MSB8).